The following is a 423-amino-acid chain: Osteomodulin (423 aa).

The signal sequence occupies residues 1-20 (MGCLRPIYVLFFCFVVRVYG). Tyr-22, Tyr-25, Tyr-31, Tyr-39, Tyr-51, and Tyr-77 each carry sulfotyrosine. The region spanning 53–91 (APFYQNILGCAKECFCPTNFPTSMYCDNRKLKTIPDIPM) is the LRRNT domain. LRR repeat units follow at residues 92–113 (HIQQ…SFIN), 116–129 (HLKE…KIKS), 142–164 (NLQQ…PKSL), 165–184 (ERLL…AMDG), 187–207 (NVTM…KGKI), 213–233 (KLMQ…GLPL), 234–255 (SLMY…YFQK), 258–279 (KLHA…IFNL), 281–294 (NLIE…KLKQ), 301–322 (NLEH…MMCP), and 331–353 (HLTY…IFFC). Residues Asn-113 and Asn-121 are each glycosylated (N-linked (GlcNAc...) asparagine). An N-linked (GlcNAc...) asparagine glycan is attached at Asn-187. N-linked (GlcNAc...) asparagine glycans are attached at residues Asn-242 and Asn-278. Asn-316 carries an N-linked (GlcNAc...) asparagine glycan. Cys-321 and Cys-353 form a disulfide bridge. Residues 383–408 (YQDEEEEEEDDSQDHTLEGQEETEEH) form a disordered region. Over residues 385–394 (DEEEEEEDDS) the composition is skewed to acidic residues. Residues Tyr-413 and Tyr-414 each carry the sulfotyrosine modification.

Belongs to the small leucine-rich proteoglycan (SLRP) family. SLRP class II subfamily. In terms of assembly, binds the alpha(V)beta(3)-integrin. In terms of processing, glycosylated; contains keratan sulfate. In terms of tissue distribution, osteoblast and odontoblast. Expressed in femoral bone and calvaria tissues. Detected in femoral head, rib, tendon and bone marrow.

The protein localises to the secreted. The protein resides in the extracellular space. It is found in the extracellular matrix. In terms of biological role, may be implicated in biomineralization processes. Has a function in binding of osteoblasts via the alpha(V)beta(3)-integrin. The protein is Osteomodulin (Omd) of Rattus norvegicus (Rat).